The following is a 56-amino-acid chain: Preprotein translocase subunit SecG (56 aa).

The Cytoplasmic portion of the chain corresponds to 1–29 (MAKEKATLPPTGAGLMRFFDEDTKAVKIS). A helical transmembrane segment spans residues 30–51 (PRGVIALTLILVALEILLHAFG). Over 52 to 56 (PQIFG) the chain is Extracellular.

It belongs to the SEC61-beta family. As to quaternary structure, component of the protein translocase complex. Heterotrimer consisting of alpha (SecY), beta (SecG) and gamma (SecE) subunits. Can form oligomers of the heterotrimer.

It localises to the cell membrane. Its function is as follows. Involved in protein export. The function of the beta subunit is unknown, but it may be involved in stabilization of the trimeric complex. The polypeptide is Preprotein translocase subunit SecG (Thermococcus onnurineus (strain NA1)).